Consider the following 936-residue polypeptide: Altered inheritance of mitochondria protein 3 (936 aa).

Disordered regions lie at residues 1–315, 341–795, 818–893, and 908–936; these read MGFW…LNQN, MSST…EATG, NLEK…KSLE, and SAAD…HKLK. Over residues 36-54 the composition is skewed to basic residues; it reads ASKKHYNNSKARRERKSGK. Phosphoserine is present on residues S57, S58, and S64. Acidic residues predominate over residues 59–68; the sequence is DEEYESEDEM. Residues 69-84 are compositionally biased toward basic and acidic residues; that stretch reads EHERKPTDIRSLKDPK. Composition is skewed to low complexity over residues 93-105 and 130-152; these read PGQK…QQQQ and QSQY…GVMP. Residues 166-244 show a composition bias toward polar residues; the sequence is GSNSNATSYQ…YVSHGSTNLG (79 aa). 2 stretches are compositionally biased toward low complexity: residues 245-267 and 306-315; these read QSQF…VLPS and QQQQQPLNQN. Residues 341-354 show a composition bias toward polar residues; sequence MSSTTNMQDSNPSY. A compositionally biased stretch (pro residues) spans 366 to 382; sequence GGQPPVPVRMQPQPPQP. Residues 453–462 show a composition bias toward polar residues; it reads IQPNTTSSAA. The residue at position 463 (S463) is a Phosphoserine. Composition is skewed to basic and acidic residues over residues 475–489, 513–528, and 598–615; these read DNER…DEST, HGLD…KNAS, and EIKD…DRNV. Composition is skewed to low complexity over residues 622–632 and 656–665; these read QSKSQSQSQSQ and SQSSNSSDSS. T718 is subject to Phosphothreonine. Residues 738–748 are compositionally biased toward basic and acidic residues; sequence DSSKDANKYEK. Over residues 752-763 the composition is skewed to polar residues; it reads PVTSSIQAQQST. Position 850 is a phosphothreonine (T850). The segment covering 851-868 has biased composition (pro residues); the sequence is PPRPPPSRSSPKKVPPVV. Positions 877 to 888 are enriched in basic residues; sequence KKPPVVPKKKPL.

This sequence belongs to the AIM3 family. Interacts with RVS167.

The protein resides in the membrane raft. The protein is Altered inheritance of mitochondria protein 3 (AIM3) of Saccharomyces cerevisiae (strain RM11-1a) (Baker's yeast).